The sequence spans 529 residues: Beta-hexosaminidase subunit alpha (529 aa).

The N-terminal stretch at 1–22 is a signal peptide; it reads MASSRLWFSLLLAAALAGRATA. Residues 23–88 constitute a propeptide that is removed on maturation; it reads LWPWPQNIQT…PRPYLTGKRH (66 aa). The cysteines at positions 58 and 104 are disulfide-linked. N-linked (GlcNAc...) asparagine glycosylation is found at N115, N157, and N295. C277 and C328 are disulfide-bonded. The active-site Proton donor is the E323. The critical for hydrolysis GM2 gangliosides stretch occupies residues 423–424; the sequence is NR. Cysteines 505 and 522 form a disulfide.

Belongs to the glycosyl hydrolase 20 family. There are 3 beta-hexosaminidase isozymes: isozyme A (hexosaminidase A) is a heterodimer composed of one subunit alpha and one subunit beta (chain A and B); isozyme B (hexosaminidase B) is a homodimer of two beta subunits (two chains A and B); isozyme S (hexosaminidase S) is a homodimer of two alpha subunits. The composition of the dimer (isozyme A versus isozyme S) has a significant effect on the substrate specificity of the alpha subunit active site.

The protein localises to the lysosome. It catalyses the reaction Hydrolysis of terminal non-reducing N-acetyl-D-hexosamine residues in N-acetyl-beta-D-hexosaminides.. The catalysed reaction is N-acetyl-beta-D-galactosaminyl-(1-&gt;4)-beta-D-3-sulfogalactosyl-(1-&gt;4)-beta-D-glucosyl-(1&lt;-&gt;1')-ceramide + H2O = a beta-D-3-sulfogalactosyl-(1-&gt;4)-beta-D-glucosyl-(1&lt;-&gt;1')-ceramide + N-acetyl-beta-D-galactosamine. It carries out the reaction a ganglioside GM2 (d18:1(4E)) + H2O = a ganglioside GM3 (d18:1(4E)) + N-acetyl-beta-D-galactosamine. The enzyme catalyses a ganglioside GM2 + H2O = a ganglioside GM3 + N-acetyl-beta-D-galactosamine. It catalyses the reaction beta-D-GalNAc-(1-&gt;4)-alpha-L-IdoA-(1-&gt;3)-beta-D-GalNAc-4-sulfate-(1-&gt;4)-alpha-L-IdoA-(1-&gt;3)-D-GalNAc-4-sulfate + H2O = alpha-L-IdoA-(1-&gt;3)-beta-D-GalNAc-4-sulfate-(1-&gt;4)-alpha-L-IdoA-(1-&gt;3)-D-GalNAc-4-sulfate + N-acetyl-D-galactosamine. The catalysed reaction is N-acetyl-beta-D-6-sulfogalactosaminyl-(1-&gt;4)-alpha-L-iduronyl-(1-&gt;3)-N-acetyl-D-6-sulfogalactosamine + H2O = alpha-L-iduronyl-(1-&gt;3)-N-acetyl-D-6-sulfogalactosamine + N-acetyl-D-6-sulfogalactosamine. Its activity is regulated as follows. Addition of GM2A stimulates the hydrolysis of sulfated glycosphingolipid SM2 and the ganglioside GM2. Functionally, hydrolyzes the non-reducing end N-acetyl-D-hexosamine and/or sulfated N-acetyl-D-hexosamine of glycoconjugates, such as the oligosaccharide moieties from proteins and neutral glycolipids, or from certain mucopolysaccharides. The isozyme S is as active as the isozyme A on the anionic bis-sulfated glycans, the chondroitin-6-sulfate trisaccharide (C6S-3), and the dermatan sulfate pentasaccharide, and the sulfated glycosphingolipid SM2. The isozyme B does not hydrolyze each of these substrates, however hydrolyzes efficiently neutral oligosaccharide. Only the isozyme A is responsible for the degradation of GM2 gangliosides in the presence of GM2A. The sequence is that of Beta-hexosaminidase subunit alpha from Pongo abelii (Sumatran orangutan).